The following is a 425-amino-acid chain: Putative E3 ubiquitin-protein ligase UBR7 (425 aa).

A UBR-type zinc finger spans residues 44–116 (EKCSYSQGSV…KNLECKLFPD (73 aa)). The segment at 132 to 188 (GLYCVCKRPYPDPEDEVPDEMIQCVVCEDWFHGRHLGAIPPESGDFQEMVCQACMRR) adopts a PHD-type; atypical zinc-finger fold. The interval 212–269 (LPNATGMGDEDVSKPENGAPQDNGLKEDAPEHGRDSVNEVKAEQKNEPCSSSSSESDL) is disordered. Residues Lys-225 and Lys-252 each participate in a glycyl lysine isopeptide (Lys-Gly) (interchain with G-Cter in SUMO2) cross-link. Residues 235–257 (GLKEDAPEHGRDSVNEVKAEQKN) show a composition bias toward basic and acidic residues. Ser-264 is modified (phosphoserine). Glycyl lysine isopeptide (Lys-Gly) (interchain with G-Cter in SUMO2) cross-links involve residues Lys-274 and Lys-398.

Expressed in testis and sperm (at protein level).

It carries out the reaction S-ubiquitinyl-[E2 ubiquitin-conjugating enzyme]-L-cysteine + [acceptor protein]-L-lysine = [E2 ubiquitin-conjugating enzyme]-L-cysteine + N(6)-ubiquitinyl-[acceptor protein]-L-lysine.. The protein operates within protein modification; protein ubiquitination. Its function is as follows. E3 ubiquitin-protein ligase which is a component of the N-end rule pathway. Recognizes and binds to proteins bearing specific N-terminal residues that are destabilizing according to the N-end rule, leading to their ubiquitination and subsequent degradation. This Mus musculus (Mouse) protein is Putative E3 ubiquitin-protein ligase UBR7 (Ubr7).